A 402-amino-acid polypeptide reads, in one-letter code: Zinc finger protein 586 (402 aa).

The region spanning 15-87 (VTFEDVAVNF…DQGGHSGERP (73 aa)) is the KRAB domain. The C2H2-type 1; degenerate zinc finger occupies 88–116 (YECGEYRKLFKNKSCLTEPRRDHKHRNVR). The segment at 122–144 (YECSKYGKLFHQKPTLHIHERFH) adopts a C2H2-type 2; degenerate zinc-finger fold. The C2H2-type 3; degenerate zinc finger occupies 150–172 (YECSECGKSFHQSSSLLQRQTLH). 8 C2H2-type zinc fingers span residues 178 to 200 (YECIECGKAFAEKSSLINHRKVH), 206 to 228 (YECNECGKSFAYTSSLIKHRRIH), 234 to 256 (YECSECGRSFAENSSLIKHLRVH), 262 to 284 (YECVECGKSFRRSSSLLQHQRVH), 290 to 312 (YECSECGKSFSLRSNLIHHQRVH), 317 to 339 (HECGQCGKSFSRKSSLIIHLRVH), 345 to 367 (YECSDCGKSFAENSSLIKHLRVH), and 373 to 395 (YECIDCGKSFRHSSSFRRHQRVH).

The protein belongs to the krueppel C2H2-type zinc-finger protein family.

It localises to the nucleus. Functionally, may be involved in transcriptional regulation. This is Zinc finger protein 586 (ZNF586) from Homo sapiens (Human).